Consider the following 206-residue polypeptide: Dehydration-responsive element-binding protein 2D (206 aa).

A disordered region spans residues 13–40; it reads ANKKQRTVQASSRKGCMRGKGGPDNASC. A DNA-binding region (AP2/ERF) is located at residues 41–98; the sequence is TYKGVRQRTWGKWVAEIREPNRGARLWLGTFDTSREAALAYDSAARKLYGPEAHLNLP. The disordered stretch occupies residues 102–139; that stretch reads RSYPKTASSPASQTTPSSNTGGKSSSDSESPCSSNEMS. Residues 107-139 are compositionally biased toward low complexity; it reads TASSPASQTTPSSNTGGKSSSDSESPCSSNEMS.

It belongs to the AP2/ERF transcription factor family. ERF subfamily.

Its subcellular location is the nucleus. Functionally, putative transcriptional activator that binds specifically to the DNA sequence 5'-[AG]CCGAC-3'. Binding to the C-repeat/DRE element mediates high salinity-inducible transcription. The chain is Dehydration-responsive element-binding protein 2D (DREB2D) from Arabidopsis thaliana (Mouse-ear cress).